The following is a 778-amino-acid chain: Endonuclease MutS2 (778 aa).

328 to 335 (GPNTGGKT) is an ATP binding site. Residues 702 to 777 (LDLRGKRYEE…GSGATIVTFK (76 aa)) enclose the Smr domain.

Belongs to the DNA mismatch repair MutS family. MutS2 subfamily. In terms of assembly, homodimer. Binds to stalled ribosomes, contacting rRNA.

Endonuclease that is involved in the suppression of homologous recombination and thus may have a key role in the control of bacterial genetic diversity. Its function is as follows. Acts as a ribosome collision sensor, splitting the ribosome into its 2 subunits. Detects stalled/collided 70S ribosomes which it binds and splits by an ATP-hydrolysis driven conformational change. Acts upstream of the ribosome quality control system (RQC), a ribosome-associated complex that mediates the extraction of incompletely synthesized nascent chains from stalled ribosomes and their subsequent degradation. Probably generates substrates for RQC. This is Endonuclease MutS2 from Streptococcus pneumoniae serotype 2 (strain D39 / NCTC 7466).